The sequence spans 189 residues: Ribosome maturation factor RimP (189 aa).

This sequence belongs to the RimP family.

Its subcellular location is the cytoplasm. Functionally, required for maturation of 30S ribosomal subunits. The protein is Ribosome maturation factor RimP of Corynebacterium kroppenstedtii (strain DSM 44385 / JCM 11950 / CIP 105744 / CCUG 35717).